A 370-amino-acid polypeptide reads, in one-letter code: Sodium-dependent organic anion transporter (370 aa).

Positions 1 to 24 (MSADCEGNSTCPANSTEEDPPVGM) are disordered. Residues 1 to 32 (MSADCEGNSTCPANSTEEDPPVGMEGQGSLKL) are Extracellular-facing. Asparagine 8 and asparagine 14 each carry an N-linked (GlcNAc...) asparagine glycan. Residues 33–53 (VFTVLSAVMVGLVMFSFGCSV) form a helical membrane-spanning segment. Residues 54 to 67 (ESRKLWLHLRRPWG) are Cytoplasmic-facing. A helical transmembrane segment spans residues 68–88 (IAVGLLCQFGLMPLTAYLLAI). Residues 89 to 97 (GFGLKPFQA) are Extracellular-facing. A helical transmembrane segment spans residues 98-118 (IAVLIMGSCPGGTVSNVLTFW). Residues 119-126 (VDGDMDLS) lie on the Cytoplasmic side of the membrane. Residues 127–147 (ISMTTCSTVAALGMMPLCLYV) traverse the membrane as a helical segment. Over 148-159 (YTRSWTLPQSLT) the chain is Extracellular. A helical membrane pass occupies residues 160–180 (IPYQSIGITLVSLVVPVASGI). Residues 181–195 (YVNYRWPKQATFILK) are Cytoplasmic-facing. A helical transmembrane segment spans residues 196–216 (VGAAVGGMLLLVVAVTGVVLA). Residues 217-224 (KGWNIDVT) lie on the Extracellular side of the membrane. A helical transmembrane segment spans residues 225–245 (LLVISCIFPLVGHVMGFLLAF). Residues 246 to 265 (LTHQSWQRCRTISIETGAQN) are Cytoplasmic-facing. Residues 266 to 283 (IQLCIAMMQLSFSAEYLV) form a helical membrane-spanning segment. Position 284 (glutamine 284) is a topological domain, extracellular. Residues 285-305 (LLNFALAYGLFQVLHGLLIVA) form a helical membrane-spanning segment. Residues 306-370 (AYQAYKRRQK…ELTSHVPSCE (65 aa)) lie on the Cytoplasmic side of the membrane.

The protein belongs to the bile acid:sodium symporter (BASS) (TC 2.A.28) family. Glycosylated. As to expression, highly expressed in heart, lung, spleen and adrenal gland. Moderately expressed in skeletal muscle, testis and small intestine.

The protein resides in the membrane. The catalysed reaction is estrone 3-sulfate(out) + 2 Na(+)(out) = estrone 3-sulfate(in) + 2 Na(+)(in). It carries out the reaction 17beta-estradiol 3-sulfate(out) + 2 Na(+)(out) = 17beta-estradiol 3-sulfate(in) + 2 Na(+)(in). It catalyses the reaction dehydroepiandrosterone 3-sulfate(out) + 2 Na(+)(out) = dehydroepiandrosterone 3-sulfate(in) + 2 Na(+)(in). The enzyme catalyses androst-5-ene-diol 3-sulfate(out) + 2 Na(+)(out) = androst-5-ene-diol 3-sulfate(in) + 2 Na(+)(in). The catalysed reaction is pregnenolone sulfate(out) + 2 Na(+)(out) = pregnenolone sulfate(in) + 2 Na(+)(in). It carries out the reaction taurolithocholate 3-sulfate(out) + 2 Na(+)(out) = taurolithocholate 3-sulfate(in) + 2 Na(+)(in). It catalyses the reaction androsterone 3alpha-sulfate(out) + 2 Na(+)(out) = androsterone 3alpha-sulfate(in) + 2 Na(+)(in). The enzyme catalyses 5alpha-dihydrotestosterone sulfate(out) + 2 Na(+)(out) = 5alpha-dihydrotestosterone sulfate(in) + 2 Na(+)(in). The catalysed reaction is 17beta-estradiol 17-sulfate(out) + 2 Na(+)(out) = 17beta-estradiol 17-sulfate(in) + 2 Na(+)(in). It carries out the reaction 17alpha-hydroxypregnenolone 3-sulfate(out) + 2 Na(+)(out) = 17alpha-hydroxypregnenolone 3-sulfate(in) + 2 Na(+)(in). It catalyses the reaction epiandrosterone 3-sulfate(out) + 2 Na(+)(out) = epiandrosterone 3-sulfate(in) + 2 Na(+)(in). The enzyme catalyses epitestosterone 17-sulfate(out) + 2 Na(+)(out) = epitestosterone 17-sulfate(in) + 2 Na(+)(in). The catalysed reaction is testosterone 17-sulfate(out) + 2 Na(+)(out) = testosterone 17-sulfate(in) + 2 Na(+)(in). It carries out the reaction 16alpha-hydroxydehydroepiandrosterone 3-sulfate(out) + 2 Na(+)(out) = 16alpha-hydroxydehydroepiandrosterone 3-sulfate(in) + 2 Na(+)(in). Its function is as follows. Transports sulfoconjugated steroid hormones from the extracellular compartment into the cytosol in a sodium-dependent manner without hydrolysis. Steroid sulfate hormones are commonly considered to be biologically inactive metabolites, that may be activated by steroid sulfatases into free steroids. May play an important role by delivering sulfoconjugated steroids to specific target cells in reproductive organs. May play a role transporting the estriol precursor 16alpha-hydroxydehydroepiandrosterone 3-sulfate (16a-OH-DHEAS) at the fetal blood vessel endothelium. Can also transport other sulfoconjugated molecules such as taurolithocholic acid-3-sulfate and sulfoconjugated pyrenes. This is Sodium-dependent organic anion transporter (Slc10a6) from Rattus norvegicus (Rat).